The following is a 177-amino-acid chain: Large ribosomal subunit protein uL6 (177 aa).

Belongs to the universal ribosomal protein uL6 family. Part of the 50S ribosomal subunit.

This protein binds to the 23S rRNA, and is important in its secondary structure. It is located near the subunit interface in the base of the L7/L12 stalk, and near the tRNA binding site of the peptidyltransferase center. This is Large ribosomal subunit protein uL6 from Acinetobacter baumannii (strain SDF).